A 237-amino-acid chain; its full sequence is Sugar fermentation stimulation protein homolog (237 aa).

Belongs to the SfsA family.

This Pseudomonas putida (strain ATCC 47054 / DSM 6125 / CFBP 8728 / NCIMB 11950 / KT2440) protein is Sugar fermentation stimulation protein homolog.